A 223-amino-acid polypeptide reads, in one-letter code: Ribose-5-phosphate isomerase A (223 aa).

Residues 28 to 31 (TGST), 81 to 84 (DGAD), and 94 to 97 (KGGG) each bind substrate. Glutamate 103 serves as the catalytic Proton acceptor. Lysine 121 contacts substrate.

It belongs to the ribose 5-phosphate isomerase family. As to quaternary structure, homodimer.

The enzyme catalyses aldehydo-D-ribose 5-phosphate = D-ribulose 5-phosphate. The protein operates within carbohydrate degradation; pentose phosphate pathway; D-ribose 5-phosphate from D-ribulose 5-phosphate (non-oxidative stage): step 1/1. Functionally, catalyzes the reversible conversion of ribose-5-phosphate to ribulose 5-phosphate. The polypeptide is Ribose-5-phosphate isomerase A (Herminiimonas arsenicoxydans).